A 364-amino-acid polypeptide reads, in one-letter code: GDSL esterase/lipase 7 (364 aa).

The signal sequence occupies residues 1–19 (MKSLLICLVLLELVWLGNG). Ser37 functions as the Nucleophile in the catalytic mechanism. Asn236, Asn237, and Asn264 each carry an N-linked (GlcNAc...) asparagine glycan. Active-site residues include Asp329 and His332. N-linked (GlcNAc...) asparagine glycosylation occurs at Asn351.

It belongs to the 'GDSL' lipolytic enzyme family.

Its subcellular location is the secreted. The chain is GDSL esterase/lipase 7 (GLIP7) from Arabidopsis thaliana (Mouse-ear cress).